The sequence spans 32 residues: Islet amyloid polypeptide (32 aa).

The protein belongs to the calcitonin family. As to quaternary structure, can form homodimers. Interacts with IDE and INS. Interaction with INS inhibits homodimerization and fibril formation.

The protein resides in the secreted. Its function is as follows. Amylin/IAPP is a glucoregulatory peptide hormone that plays an important role in the regulation of energy homeostasis. Selectively inhibits insulin-stimulated glucose utilization and glycogen deposition in muscle, while not affecting adipocyte glucose metabolism. IAPP function is mediated by the CALCR-RAMPs (AMYRs) receptor complexes. Amylin can also bind CALCR receptor in the absence of RAMPs, although it is more selective for AMYRs. This is Islet amyloid polypeptide (IAPP) from Saguinus oedipus (Cotton-top tamarin).